We begin with the raw amino-acid sequence, 64 residues long: Large ribosomal subunit protein bL35 (64 aa).

This sequence belongs to the bacterial ribosomal protein bL35 family.

The chain is Large ribosomal subunit protein bL35 from Shewanella baltica (strain OS223).